A 43-amino-acid chain; its full sequence is Protein PsbN (43 aa).

Residues 5–25 (TLISVFVASLVIGITAYAIFV) traverse the membrane as a helical segment.

This sequence belongs to the PsbN family.

It is found in the plastid. The protein resides in the chloroplast thylakoid membrane. Its function is as follows. May play a role in photosystem I and II biogenesis. In Cyanidioschyzon merolae (strain NIES-3377 / 10D) (Unicellular red alga), this protein is Protein PsbN.